We begin with the raw amino-acid sequence, 234 residues long: LexA repressor (234 aa).

The segment at residues 41–61 (RAEIANELGFKSANAAEEHLQ) is a DNA-binding region (H-T-H motif). Active-site for autocatalytic cleavage activity residues include Ser-152 and Lys-189.

This sequence belongs to the peptidase S24 family. Homodimer.

The enzyme catalyses Hydrolysis of Ala-|-Gly bond in repressor LexA.. In terms of biological role, represses a number of genes involved in the response to DNA damage (SOS response), including recA and lexA. In the presence of single-stranded DNA, RecA interacts with LexA causing an autocatalytic cleavage which disrupts the DNA-binding part of LexA, leading to derepression of the SOS regulon and eventually DNA repair. The chain is LexA repressor from Polaromonas sp. (strain JS666 / ATCC BAA-500).